The sequence spans 311 residues: Urease accessory protein UreD 3 (311 aa).

Belongs to the UreD family. In terms of assembly, ureD, UreF and UreG form a complex that acts as a GTP-hydrolysis-dependent molecular chaperone, activating the urease apoprotein by helping to assemble the nickel containing metallocenter of UreC. The UreE protein probably delivers the nickel.

Its subcellular location is the cytoplasm. Required for maturation of urease via the functional incorporation of the urease nickel metallocenter. This Methylorubrum populi (strain ATCC BAA-705 / NCIMB 13946 / BJ001) (Methylobacterium populi) protein is Urease accessory protein UreD 3.